The following is a 133-amino-acid chain: Protein msa (133 aa).

4 helical membrane passes run 3–23 (YLIL…AIGL), 27–47 (ILAA…ILFF), 55–75 (YIFF…VHLM), and 103–123 (FGFD…IILY).

It is found in the cell membrane. In terms of biological role, accessory element involved in the expression of sarA and several virulence factors. Modulates SarA production and/or function in a strain-dependent manner. Affects the transcription of the accessory gene regulator (agr) and genes encoding virulence factors including alpha toxin (hla) and protein A (spa). This chain is Protein msa (msa), found in Staphylococcus aureus (strain bovine RF122 / ET3-1).